The following is a 550-amino-acid chain: MLKNINPTETQAWADLTAHFETAQDFNLSDLFAADAQRFDKFSATFGQDILVDFSKNLITEETMKKLFALAEQTELSSAITAMFSGEKINKTEGRSVLHTALRNRSNTPVMVDGEDVMPAVNAVLEKMKGFTERLISGEWKGYTGKEITDIVNIGIGGSDLGPYMVSEALAPYKTRLNMHFVSNVDGTHIVETLKPLNPETTLFLIASKTFTTQETMTNAHSARDWFLAEAGDQAHVAKHFAALSTNAQSVSEFGIDTDNMFEFWDWVGGRYSLWSAIGLSIALAVGFDNFIELLEGAHEVDKHFAETDLENNVPVILALIGLWYNNFHGAESESILPYDQYLHRFAAYFQQGNMESNGKCVDRNGNPVDYQTGPIIWGEPGTNGQHAFYQLIHQGTKLIPCDFIAPAISHNQVGDHHQKLMSNFFAQTEALAFGKTEETVKAEFAAAGKTEAEVAELVPFKVFEGNRPTNSILVKQVTPKTLGNLIAMYEHKIFVQGVIWNIFSFDQWGVELGKQLANQILPELADDKAVTSHDSSTNGLINAFKAFQA.

E356 acts as the Proton donor in catalysis. Residues H387 and K515 contribute to the active site.

The protein belongs to the GPI family.

It is found in the cytoplasm. The catalysed reaction is alpha-D-glucose 6-phosphate = beta-D-fructose 6-phosphate. It participates in carbohydrate biosynthesis; gluconeogenesis. It functions in the pathway carbohydrate degradation; glycolysis; D-glyceraldehyde 3-phosphate and glycerone phosphate from D-glucose: step 2/4. Catalyzes the reversible isomerization of glucose-6-phosphate to fructose-6-phosphate. This is Glucose-6-phosphate isomerase from Aliivibrio fischeri (strain MJ11) (Vibrio fischeri).